A 206-amino-acid chain; its full sequence is Amelogenin, Y isoform (206 aa).

The signal sequence occupies residues 1 to 16; that stretch reads MGTWILFACLVGAAFA. A disordered region spans residues 118–180; it reads VPGQQSMTPT…PPLPPMFPLR (63 aa). A compositionally biased stretch (low complexity) spans 128-142; it reads QHHQPNLPLPAQQPF. Residues 143–180 are compositionally biased toward pro residues; it reads QPQPVQPQPHQPMQPQPPVQPMQPLLPQPPLPPMFPLR.

This sequence belongs to the amelogenin family.

It localises to the secreted. The protein resides in the extracellular space. Its subcellular location is the extracellular matrix. Functionally, plays a role in biomineralization. Seems to regulate the formation of crystallites during the secretory stage of tooth enamel development. Thought to play a major role in the structural organization and mineralization of developing enamel. This is Amelogenin, Y isoform (AMELY) from Homo sapiens (Human).